The sequence spans 337 residues: 2-oxoglutarate receptor 1 (337 aa).

The Extracellular portion of the chain corresponds to 1–37; sequence MIETLDSPANDSDFLDYITALENCTDEQISFKMQYLP. The N-linked (GlcNAc...) asparagine glycan is linked to N23. Residues 38–58 form a helical membrane-spanning segment; sequence VIYSIIFLVGFPGNTVAISIY. Topologically, residues 59-69 are cytoplasmic; sequence VFKMRPWKSST. Residues 70–90 form a helical membrane-spanning segment; sequence IIMLNLALTDLLYLTSLPFLI. The Extracellular segment spans residues 91–116; sequence HYYASGENWIFGDFMCKFIRFGFHFN. C106 and C183 are oxidised to a cystine. Residues 117–137 form a helical membrane-spanning segment; it reads LYSSILFLTCFSLFRYIVIIH. At 138-151 the chain is on the cytoplasmic side; the sequence is PMSCFSIQKTRWAV. Residues 152 to 172 form a helical membrane-spanning segment; the sequence is VACAGVWVISLVAVMPMTFLI. Residues 173–200 lie on the Extracellular side of the membrane; sequence TSTTRTNRSACLDLTSSDDLTTIKWYNL. The helical transmembrane segment at 201–221 threads the bilayer; it reads ILTATTFCLPLLIVTLCYTTI. The Cytoplasmic portion of the chain corresponds to 222-242; the sequence is ISTLTHGPRTHSCFKQKARRL. The chain crosses the membrane as a helical span at residues 243 to 263; the sequence is TILLLLVFYVCFLPFHILRVI. Over 264-284 the chain is Extracellular; it reads RIESRLLSISCSIESHIHEAY. A helical transmembrane segment spans residues 285 to 305; sequence IVSRPLAALNTFGNLLLYVVV. Residues 306–337 lie on the Cytoplasmic side of the membrane; that stretch reads SNNFQQAFCSAVRCKAIGDLEQAKKDSCSNNP.

Belongs to the G-protein coupled receptor 1 family. As to expression, highly expressed in mast cells and is found predominantly in the tissues of the respiratory tract and kidneys.

Its subcellular location is the cell membrane. Its function is as follows. G protein-coupled receptor for dicarboxylates and amino dicarboxylates. Receptor for itaconate, a metabolite produced by myeloid lineages. In the respiratory epithelium, couples the binding of itaconate to the activation of GNA11 and downstream intracellular Ca(2+) release, leading to mucocilliary clearance of airborne pathogens. Receptor for leukotriene E4 (LTE4) produced by mast cells upon allergic inflammation. Binds with high affinity to LTE4 and elicits mucin release from pulmonary epithelium in response to airborne fungi allergens. Regulates mucin-producing goblet cell homeostasis. Receptor for alpha-ketoglutarate produced by proximal tubule renal cells upon metabolic alkalosis. In an intrarenal paracrine signaling pathway, binds alpha-ketoglutarate and drives transepithelial salt reabsorption and bicarbonate secretion by SLC26A4/pendrin-positive intercalated cells. The sequence is that of 2-oxoglutarate receptor 1 (Oxgr1) from Rattus norvegicus (Rat).